A 327-amino-acid polypeptide reads, in one-letter code: Putative pumilio homolog 19 (327 aa).

The PUM-HD domain maps to 1 to 324 (MAVSDNTFSM…NIANILDTFR (324 aa)). Pumilio repeat units follow at residues 79 to 114 (SDSD…FCAA), 115 to 149 (ILRR…ALYE), 150 to 185 (RILY…DQLL), 186 to 222 (ELVV…NIAV), 223 to 260 (NLYG…ELLG), and 261 to 295 (CDGD…DLFW).

Its subcellular location is the cytoplasm. Sequence-specific RNA-binding protein that regulates translation and mRNA stability by binding the 3'-UTR of target mRNAs. In Arabidopsis thaliana (Mouse-ear cress), this protein is Putative pumilio homolog 19 (APUM19).